The sequence spans 186 residues: Phosphopantetheine adenylyltransferase (186 aa).

Residue Thr-14 participates in substrate binding. Residues 14–15 and His-22 each bind ATP; that span reads TF. Residues Lys-46, Leu-78, and Arg-92 each coordinate substrate. ATP contacts are provided by residues 93–95, Glu-103, and 128–134; these read GLR and WLYISST.

This sequence belongs to the bacterial CoaD family. In terms of assembly, homohexamer. It depends on Mg(2+) as a cofactor.

The protein localises to the cytoplasm. It catalyses the reaction (R)-4'-phosphopantetheine + ATP + H(+) = 3'-dephospho-CoA + diphosphate. It participates in cofactor biosynthesis; coenzyme A biosynthesis; CoA from (R)-pantothenate: step 4/5. Its function is as follows. Reversibly transfers an adenylyl group from ATP to 4'-phosphopantetheine, yielding dephospho-CoA (dPCoA) and pyrophosphate. This Nitratidesulfovibrio vulgaris (strain ATCC 29579 / DSM 644 / CCUG 34227 / NCIMB 8303 / VKM B-1760 / Hildenborough) (Desulfovibrio vulgaris) protein is Phosphopantetheine adenylyltransferase.